Here is a 413-residue protein sequence, read N- to C-terminus: MAPPSVFAEVPQAQPVLVFKLTADFREDPDPRKVNLGVGAYRTDDCHPWVLPVVKKVEQKIANDNSLNHEYLPILGLAEFRSCASRLALGDDSPALKEKRVGGVQSLGGTGALRIGADFLARWYNGTNNKNTPVYVSSPTWENHNAVFSAAGFKDIRSYRYWDAEKRGLDLQGFLNDLENAPEFSIVVLHACAHNPTGIDPTPEQWKQIASVMKHRFLFPFFDSAYQGFASGNLERDAWAIRYFVSEGFEFFCAQSFSKNFGLYNERVGNLTVVGKEPESILQVLSQMEKIVRITWSNPPAQGARIVASTLSNPELFEEWTGNVKTMADRILTMRSELRARLEALKTPGTWNHITDQIGMFSFTGLNPKQVEYLVNEKHIYLLPSGRINVSGLTTKNLDYVATSIHEAVTKIQ.

Positions 39 and 141 each coordinate L-aspartate. The residue at position 149 (Ser149) is a Phosphoserine. An L-aspartate-binding site is contributed by Asn195. Position 259 is an N6-(pyridoxal phosphate)lysine (Lys259). An L-aspartate-binding site is contributed by Arg387.

It belongs to the class-I pyridoxal-phosphate-dependent aminotransferase family. Homodimer. Pyridoxal 5'-phosphate serves as cofactor.

Its subcellular location is the cytoplasm. It carries out the reaction L-aspartate + 2-oxoglutarate = oxaloacetate + L-glutamate. The enzyme catalyses L-cysteine + 2-oxoglutarate = 2-oxo-3-sulfanylpropanoate + L-glutamate. The catalysed reaction is (2S)-2-aminobutanoate + 2-oxoglutarate = 2-oxobutanoate + L-glutamate. It catalyses the reaction 3-sulfino-L-alanine + 2-oxoglutarate = 3-sulfinopyruvate + L-glutamate. Functionally, biosynthesis of L-glutamate from L-aspartate or L-cysteine. Important regulator of levels of glutamate, the major excitatory neurotransmitter of the vertebrate central nervous system. Acts as a scavenger of glutamate in brain neuroprotection. The aspartate aminotransferase activity is involved in hepatic glucose synthesis during development and in adipocyte glyceroneogenesis. Using L-cysteine as substrate, regulates levels of mercaptopyruvate, an important source of hydrogen sulfide. Mercaptopyruvate is converted into H(2)S via the action of 3-mercaptopyruvate sulfurtransferase (3MST). Hydrogen sulfide is an important synaptic modulator and neuroprotectant in the brain. In addition, catalyzes (2S)-2-aminobutanoate, a by-product in the cysteine biosynthesis pathway. In Homo sapiens (Human), this protein is Aspartate aminotransferase, cytoplasmic.